Consider the following 341-residue polypeptide: Peroxisomal membrane protein PEX14 (341 aa).

Ser-2 bears the N-acetylserine mark. The SH3-binding motif lies at 86–94; it reads PPTLPHRDW. A disordered region spans residues 276 to 341; sequence MQEESDKEKE…QNGQVEDSIP (66 aa). The segment covering 279-295 has biased composition (basic and acidic residues); it reads ESDKEKENGSDANKDDN. Residues 308 to 341 are compositionally biased toward polar residues; it reads IDSNASIPEWQKNTAANEISVPDWQNGQVEDSIP. A Phosphoserine modification is found at Ser-313.

This sequence belongs to the peroxin-14 family. As to quaternary structure, interacts with PEX13 (via SH3 domain); forming the PEX13-PEX14 docking complex. Interacts with PEX5 (via WxxxF/Y motifs). Interacts with PEX7. Interacts with PEX9.

The protein resides in the peroxisome membrane. Its function is as follows. Component of the PEX13-PEX14 docking complex, a translocon channel that specifically mediates the import of peroxisomal cargo proteins bound to PEX5 or PEX21 receptors. The PEX13-PEX14 docking complex forms a large import pore which can be opened to a diameter of about 9 nm. Mechanistically, PEX5 (or PEX21) receptor along with cargo proteins associates with the PEX14 subunit of the PEX13-PEX14 docking complex in the cytosol, leading to the insertion of the receptor into the organelle membrane with the concomitant translocation of the cargo into the peroxisome matrix. The sequence is that of Peroxisomal membrane protein PEX14 from Saccharomyces cerevisiae (strain ATCC 204508 / S288c) (Baker's yeast).